The chain runs to 154 residues: Protein E6 (154 aa).

2 zinc fingers span residues 34-70 (CVFC…CKFC) and 107-143 (CYRC…CLTC).

Belongs to the papillomaviridae E6 protein family. Forms homodimers. Interacts with ubiquitin-protein ligase UBE3A/E6-AP; this interaction stimulates UBE3A ubiquitin activity. Interacts with host TP53 and EP300; this interaction inhibits TP53 activity.

It localises to the host cytoplasm. The protein resides in the host nucleus. Plays a major role in the induction and maintenance of cellular transformation. E6 associates with host UBE3A/E6-AP ubiquitin-protein ligase and modulates its activity. Sequesters tumor suppressor TP53 in the host cytoplasm and modulates its activity by interacting with host EP300 that results in the reduction of TP53 acetylation and activation. In turn, apoptosis induced by DNA damage is inhibited. E6 also protects host keratinocytes from apoptosis by mediating the degradation of host BAK1. May also inhibit host immune response. The polypeptide is Protein E6 (Human papillomavirus type 53).